A 224-amino-acid polypeptide reads, in one-letter code: Deoxyribose-phosphate aldolase (224 aa).

Asp92 functions as the Proton donor/acceptor in the catalytic mechanism. Lys155 serves as the catalytic Schiff-base intermediate with acetaldehyde. Lys184 functions as the Proton donor/acceptor in the catalytic mechanism.

The protein belongs to the DeoC/FbaB aldolase family. DeoC type 1 subfamily.

It is found in the cytoplasm. It catalyses the reaction 2-deoxy-D-ribose 5-phosphate = D-glyceraldehyde 3-phosphate + acetaldehyde. The protein operates within carbohydrate degradation; 2-deoxy-D-ribose 1-phosphate degradation; D-glyceraldehyde 3-phosphate and acetaldehyde from 2-deoxy-alpha-D-ribose 1-phosphate: step 2/2. Catalyzes a reversible aldol reaction between acetaldehyde and D-glyceraldehyde 3-phosphate to generate 2-deoxy-D-ribose 5-phosphate. This Clostridium perfringens (strain SM101 / Type A) protein is Deoxyribose-phosphate aldolase.